The sequence spans 146 residues: Anti-sigma F factor (146 aa).

The protein belongs to the anti-sigma-factor family.

The enzyme catalyses L-seryl-[protein] + ATP = O-phospho-L-seryl-[protein] + ADP + H(+). It carries out the reaction L-threonyl-[protein] + ATP = O-phospho-L-threonyl-[protein] + ADP + H(+). Its function is as follows. Binds to sigma F and blocks its ability to form an RNA polymerase holoenzyme (E-sigma F). Phosphorylates SpoIIAA on a serine residue. This phosphorylation may enable SpoIIAA to act as an anti-anti-sigma factor that counteracts SpoIIAB and thus releases sigma F from inhibition. This chain is Anti-sigma F factor, found in Bacillus cytotoxicus (strain DSM 22905 / CIP 110041 / 391-98 / NVH 391-98).